The sequence spans 1234 residues: ATP-dependent helicase/nuclease subunit A (1234 aa).

Residues 9 to 482 enclose the UvrD-like helicase ATP-binding domain; that stretch reads STWTDDQWEA…IDLNKNFRSR (474 aa). 30–37 contacts ATP; that stretch reads AAAGSGKT. The region spanning 509–800 is the UvrD-like helicase C-terminal domain; it reads QAELKLGASY…RMMTIHSSKG (292 aa).

This sequence belongs to the helicase family. AddA subfamily. In terms of assembly, heterodimer of AddA and AddB/RexB. Mg(2+) serves as cofactor.

It catalyses the reaction Couples ATP hydrolysis with the unwinding of duplex DNA by translocating in the 3'-5' direction.. It carries out the reaction ATP + H2O = ADP + phosphate + H(+). In terms of biological role, the heterodimer acts as both an ATP-dependent DNA helicase and an ATP-dependent, dual-direction single-stranded exonuclease. Recognizes the chi site generating a DNA molecule suitable for the initiation of homologous recombination. The AddA nuclease domain is required for chi fragment generation; this subunit has the helicase and 3' -&gt; 5' nuclease activities. The protein is ATP-dependent helicase/nuclease subunit A of Bacillus pumilus (strain SAFR-032).